The chain runs to 144 residues: Elicitor-responsive protein 3 (144 aa).

In terms of domain architecture, C2 spans 1–103 (MVQGTLEVLL…YTEGSIPPTV (103 aa)). Ca(2+) contacts are provided by D20, D26, D73, D75, and D81. The segment at 123–144 (TPEDDRDRGLSEEDIGGWKQSS) is disordered.

Ca(2+) is required as a cofactor.

The sequence is that of Elicitor-responsive protein 3 (ERG3) from Oryza sativa subsp. indica (Rice).